Reading from the N-terminus, the 317-residue chain is Acetyl-coenzyme A carboxylase carboxyl transferase subunit alpha (317 aa).

A CoA carboxyltransferase C-terminal domain is found at 40–293 (LEKRSADALK…GDIIAASLRS (254 aa)).

This sequence belongs to the AccA family. Acetyl-CoA carboxylase is a heterohexamer composed of biotin carboxyl carrier protein (AccB), biotin carboxylase (AccC) and two subunits each of ACCase subunit alpha (AccA) and ACCase subunit beta (AccD).

The protein resides in the cytoplasm. The catalysed reaction is N(6)-carboxybiotinyl-L-lysyl-[protein] + acetyl-CoA = N(6)-biotinyl-L-lysyl-[protein] + malonyl-CoA. It participates in lipid metabolism; malonyl-CoA biosynthesis; malonyl-CoA from acetyl-CoA: step 1/1. In terms of biological role, component of the acetyl coenzyme A carboxylase (ACC) complex. First, biotin carboxylase catalyzes the carboxylation of biotin on its carrier protein (BCCP) and then the CO(2) group is transferred by the carboxyltransferase to acetyl-CoA to form malonyl-CoA. In Brucella canis (strain ATCC 23365 / NCTC 10854 / RM-666), this protein is Acetyl-coenzyme A carboxylase carboxyl transferase subunit alpha.